Consider the following 381-residue polypeptide: uncharacterized protein (381 aa).

Helical transmembrane passes span 59–79, 84–104, 147–167, 190–210, 222–242, 250–270, 284–304, 311–331, and 344–364; these read LITL…LYYM, GVAP…YQTM, VGVN…FFMA, SMMA…FNTI, LVLL…TFSI, ILTN…SIYW, HYFM…LILA, LSPI…IYKF, and VYFF…VTSL.

Belongs to the CDP-alcohol phosphatidyltransferase class-I family.

Its subcellular location is the membrane. This is an uncharacterized protein from Dictyostelium discoideum (Social amoeba).